A 295-amino-acid chain; its full sequence is Nucleotide-binding protein EF_0766 (295 aa).

12–19 (GMSGAGKT) contributes to the ATP binding site. A GTP-binding site is contributed by 62–65 (DLRS).

The protein belongs to the RapZ-like family.

Displays ATPase and GTPase activities. The chain is Nucleotide-binding protein EF_0766 from Enterococcus faecalis (strain ATCC 700802 / V583).